We begin with the raw amino-acid sequence, 121 residues long: Snaclec coagulation factor IX-binding protein subunit A (121 aa).

The 120-residue stretch at 1-120 folds into the C-type lectin domain; that stretch reads YEGHCYQTFK…CGERNPFVCE (120 aa). 2 disulfides stabilise this stretch: Cys22–Cys119 and Cys94–Cys111. Ca(2+) contacts are provided by Ser33, Glu35, and Glu39. Glu120 contacts Ca(2+).

Belongs to the snaclec family. In terms of assembly, heterodimer of subunits A and B; disulfide-linked. Expressed by the venom gland.

The protein localises to the secreted. Anticoagulant protein which binds to the gamma-carboxyglutamic acid-domain regions of factor IX (F9) (but not factor X) in the presence of calcium with a 1 to 1 stoichiometry. This chain is Snaclec coagulation factor IX-binding protein subunit A, found in Gloydius halys (Chinese water mocassin).